The primary structure comprises 462 residues: Lysyl endopeptidase (462 aa).

The signal sequence occupies residues 1-24 (MHKRTYLNACLVLALAAGASQALA). The propeptide occupies 25–211 (APGASEMAGD…VSYFADSLYK (187 aa)). 3 disulfide bridges follow: Cys224/Cys435, Cys230/Cys305, and Cys262/Cys284. Residues His283, Asp333, and Ser409 each act as charge relay system in the active site.

The protein belongs to the peptidase S1 family. In terms of processing, experiments performed in E.coli. Processing of pro-endopeptidase to mature endopeptidase is probably autocatalytic, as mutations in the probable active site residues prevent processing, and purified inactive pro-endopeptidase disappears in the presence of active endopeptidase.

The protein localises to the secreted. It catalyses the reaction Preferential cleavage: Lys-|-Xaa, including Lys-|-Pro.. Its function is as follows. Lysine-specific endoprotease. Involved in corneal virulence. The sequence is that of Lysyl endopeptidase (prpL) from Pseudomonas aeruginosa (strain ATCC 15692 / DSM 22644 / CIP 104116 / JCM 14847 / LMG 12228 / 1C / PRS 101 / PAO1).